The chain runs to 276 residues: Tryptophan synthase alpha chain (276 aa).

Active-site proton acceptor residues include Glu49 and Asp60.

The protein belongs to the TrpA family. In terms of assembly, tetramer of two alpha and two beta chains.

It carries out the reaction (1S,2R)-1-C-(indol-3-yl)glycerol 3-phosphate + L-serine = D-glyceraldehyde 3-phosphate + L-tryptophan + H2O. It participates in amino-acid biosynthesis; L-tryptophan biosynthesis; L-tryptophan from chorismate: step 5/5. In terms of biological role, the alpha subunit is responsible for the aldol cleavage of indoleglycerol phosphate to indole and glyceraldehyde 3-phosphate. The chain is Tryptophan synthase alpha chain from Corynebacterium aurimucosum (strain ATCC 700975 / DSM 44827 / CIP 107346 / CN-1) (Corynebacterium nigricans).